We begin with the raw amino-acid sequence, 131 residues long: Hydrogenase maturation factor HypA (131 aa).

His-2 lines the Ni(2+) pocket. Residues Cys-74, Cys-77, Cys-91, and Cys-94 each coordinate Zn(2+).

This sequence belongs to the HypA/HybF family.

Functionally, involved in the maturation of [NiFe] hydrogenases. Required for nickel insertion into the metal center of the hydrogenase. The chain is Hydrogenase maturation factor HypA from Streptomyces avermitilis (strain ATCC 31267 / DSM 46492 / JCM 5070 / NBRC 14893 / NCIMB 12804 / NRRL 8165 / MA-4680).